Reading from the N-terminus, the 446-residue chain is Glutamine synthetase (446 aa).

In terms of domain architecture, GS beta-grasp spans 14–106; sequence NNVKFIRFQF…VICDVYTTNG (93 aa). The 334-residue stretch at 113 to 446 folds into the GS catalytic domain; it reads PRGCLKRVLA…DWETKQYLKI (334 aa). Glu137 and Glu139 together coordinate Mg(2+). Glu187 provides a ligand contact to ATP. Glu192 and Glu199 together coordinate Mg(2+). L-glutamate-binding positions include 243-244 and Gly244; that span reads NG. Mg(2+) is bound at residue His248. ATP is bound by residues 250-252 and Ser252; that span reads HQS. Arg301, Glu307, and Arg319 together coordinate L-glutamate. Residues Arg319, Arg324, and Lys331 each contribute to the ATP site. A Mg(2+)-binding site is contributed by Glu336. Arg338 is a binding site for L-glutamate.

Belongs to the glutamine synthetase family. In terms of assembly, oligomer of 12 subunits arranged in the form of two hexagons. The cofactor is Mg(2+).

The protein resides in the cytoplasm. It carries out the reaction L-glutamate + NH4(+) + ATP = L-glutamine + ADP + phosphate + H(+). In terms of biological role, probably involved in nitrogen metabolism via ammonium assimilation. Catalyzes the ATP-dependent biosynthesis of glutamine from glutamate and ammonia. The sequence is that of Glutamine synthetase from Methanococcus maripaludis (strain DSM 14266 / JCM 13030 / NBRC 101832 / S2 / LL).